We begin with the raw amino-acid sequence, 703 residues long: Polyribonucleotide nucleotidyltransferase (703 aa).

Mg(2+) contacts are provided by Asp-486 and Asp-492. The KH domain occupies 553–612; the sequence is PKIEIIHINPDKIRDVIGPGGKKINEIIDATGVKLDIEQDGTVFIGSSDASMIEAAKKLI. The S1 motif domain occupies 622–690; the sequence is GQIYMATVKR…KQGRVNASRK (69 aa).

The protein belongs to the polyribonucleotide nucleotidyltransferase family. The cofactor is Mg(2+).

It is found in the cytoplasm. The catalysed reaction is RNA(n+1) + phosphate = RNA(n) + a ribonucleoside 5'-diphosphate. Functionally, involved in mRNA degradation. Catalyzes the phosphorolysis of single-stranded polyribonucleotides processively in the 3'- to 5'-direction. In Macrococcus caseolyticus (strain JCSC5402) (Macrococcoides caseolyticum), this protein is Polyribonucleotide nucleotidyltransferase.